The sequence spans 129 residues: Chromatin accessibility complex protein 1 (129 aa).

A2 bears the N-acetylalanine mark. K102 is modified (N6-acetyllysine). Positions 104–120 form a coiled coil; sequence LKMLKEKREEEEDNEDD. Positions 109–129 are disordered; that stretch reads EKREEEEDNEDDGSDLGEALA. The span at 112–123 shows a compositional bias: acidic residues; it reads EEEEDNEDDGSD. Position 122 is a phosphoserine (S122).

In terms of assembly, heterodimer with POLE3; binds to DNA. Component of the CHRAC ISWI chromatin remodeling complex at least composed of SMARCA5/SNF2H, BAZ1A/ACF1, CHRAC1 and POLE3; the complex preferentially binds DNA through the CHRAC1-POLE3 heterodimer and possesses ATP-dependent nucleosome-remodeling activity. Within the complex, the heterodimer with POLE3 interacts with SMARCA5/SNF2H; the interaction is direct and enhances nucleosome sliding activity by the SMARCA5/SNF2H and BAZ1A/ACF1 interaction. Within the complex, the heterodimer with POLE3 interacts with BAZ1A/ACF1; the interactions are direct. Ubiquitously expressed.

The protein localises to the nucleus. Functionally, forms a complex with DNA polymerase epsilon subunit POLE3 and binds naked DNA, which is then incorporated into chromatin, aided by the nucleosome remodeling activity of ISWI/SNF2H and ACF1. Does not enhance nucleosome sliding activity of the ACF-5 ISWI chromatin remodeling complex. In Mus musculus (Mouse), this protein is Chromatin accessibility complex protein 1 (Chrac1).